We begin with the raw amino-acid sequence, 356 residues long: MSLLSDLINLNLSDTTEKVIAEYIWIGGSGLDLRSKARTLPGPVKNPSELPKWNYDGSSTGQAPGQDSEVIIYPQAIFKDPFRRGNNILVICDAYTPAGEPIPTNKRHNAAKIFSNPDVVAEEPWYGIEQEYTLLQKEVNWPVGWPVGGFPGPQGPYYCGVGADKAFGRDIVDAHYKACVYAGINISGINGEVMPGQWEFQVGPAVGISAGDELWVARYILERITEVAGVVLSFDPKPIKGDWNGAGAHTNYSTKTMRNDGGYEEIKSAIQKLGKRHKEHIAAYGEGNERRLTGRHETADINTFLWGVANRGASIRVGRDTEKAGKGYFEDRRPASNMDPYVVTSMIADTTILWKP.

Residues 19-99 (VIAEYIWIGG…VICDAYTPAG (81 aa)) enclose the GS beta-grasp domain. The tract at residues 41-64 (PGPVKNPSELPKWNYDGSSTGQAP) is disordered. Residues 106-356 (KRHNAAKIFS…IADTTILWKP (251 aa)) enclose the GS catalytic domain.

This sequence belongs to the glutamine synthetase family. As to quaternary structure, homooctamer. Roots.

It is found in the cytoplasm. It catalyses the reaction L-glutamate + NH4(+) + ATP = L-glutamine + ADP + phosphate + H(+). The chain is Glutamine synthetase PR-1 from Phaseolus vulgaris (Kidney bean).